A 452-amino-acid polypeptide reads, in one-letter code: Tryptophan biosynthesis protein TrpCF (452 aa).

Residues 1-256 (MQTVLAKIVA…AAVRRVLLGE (256 aa)) are indole-3-glycerol phosphate synthase. Residues 257-452 (NKVCGLTRAQ…ASVFQTLRAY (196 aa)) form an N-(5'-phosphoribosyl)anthranilate isomerase region.

The protein in the N-terminal section; belongs to the TrpC family. In the C-terminal section; belongs to the TrpF family. In terms of assembly, monomer.

The catalysed reaction is N-(5-phospho-beta-D-ribosyl)anthranilate = 1-(2-carboxyphenylamino)-1-deoxy-D-ribulose 5-phosphate. The enzyme catalyses 1-(2-carboxyphenylamino)-1-deoxy-D-ribulose 5-phosphate + H(+) = (1S,2R)-1-C-(indol-3-yl)glycerol 3-phosphate + CO2 + H2O. Its pathway is amino-acid biosynthesis; L-tryptophan biosynthesis; L-tryptophan from chorismate: step 3/5. It participates in amino-acid biosynthesis; L-tryptophan biosynthesis; L-tryptophan from chorismate: step 4/5. Its function is as follows. Bifunctional enzyme that catalyzes two sequential steps of tryptophan biosynthetic pathway. The first reaction is catalyzed by the isomerase, coded by the TrpF domain; the second reaction is catalyzed by the synthase, coded by the TrpC domain. This Salmonella typhimurium (strain LT2 / SGSC1412 / ATCC 700720) protein is Tryptophan biosynthesis protein TrpCF (trpC).